Consider the following 90-residue polypeptide: Histone H1.M6.2 (90 aa).

The segment at Met1–Lys90 is disordered. Residues Ala11–Lys90 are compositionally biased toward basic residues.

Its subcellular location is the nucleus. The protein resides in the chromosome. The polypeptide is Histone H1.M6.2 (Trypanosoma cruzi).